The chain runs to 306 residues: Bifunctional protein FolD (306 aa).

NADP(+) contacts are provided by residues 166–168 (GRS) and I232.

The protein belongs to the tetrahydrofolate dehydrogenase/cyclohydrolase family. As to quaternary structure, homodimer.

It carries out the reaction (6R)-5,10-methylene-5,6,7,8-tetrahydrofolate + NADP(+) = (6R)-5,10-methenyltetrahydrofolate + NADPH. The enzyme catalyses (6R)-5,10-methenyltetrahydrofolate + H2O = (6R)-10-formyltetrahydrofolate + H(+). Its pathway is one-carbon metabolism; tetrahydrofolate interconversion. In terms of biological role, catalyzes the oxidation of 5,10-methylenetetrahydrofolate to 5,10-methenyltetrahydrofolate and then the hydrolysis of 5,10-methenyltetrahydrofolate to 10-formyltetrahydrofolate. This chain is Bifunctional protein FolD, found in Methylorubrum extorquens (strain CM4 / NCIMB 13688) (Methylobacterium extorquens).